The chain runs to 204 residues: MGAYKYMQELWRKKQSDVMRFLLRVRCWQYRQLSGLHRAPRPTRPDKARRLGYKAKQGYVIYRIRVRRGGRKRPVPKGATYGKPVHHGVNQIKFARSLQSTAEERAGRHCGALRVLNSYWVGEDSTYKFFEVILIDPFHKAVRRDPDAQWITKAVHKHREMRGLTSAGKKSRGLGKGHKFHLTIGGSRRAAWRRRNTLQLHRYR.

It belongs to the eukaryotic ribosomal protein eL15 family. As to quaternary structure, component of the large ribosomal subunit.

The protein resides in the cytoplasm. In terms of biological role, component of the large ribosomal subunit. The ribosome is a large ribonucleoprotein complex responsible for the synthesis of proteins in the cell. The chain is Large ribosomal subunit protein eL15 (rpl15) from Anguilla japonica (Japanese eel).